The chain runs to 156 residues: tRNA (cytidine(34)-2'-O)-methyltransferase (156 aa).

Positions 102, 124, and 132 each coordinate S-adenosyl-L-methionine.

The protein belongs to the class IV-like SAM-binding methyltransferase superfamily. RNA methyltransferase TrmH family. TrmL subfamily. In terms of assembly, homodimer.

The protein localises to the cytoplasm. The enzyme catalyses cytidine(34) in tRNA + S-adenosyl-L-methionine = 2'-O-methylcytidine(34) in tRNA + S-adenosyl-L-homocysteine + H(+). It catalyses the reaction 5-carboxymethylaminomethyluridine(34) in tRNA(Leu) + S-adenosyl-L-methionine = 5-carboxymethylaminomethyl-2'-O-methyluridine(34) in tRNA(Leu) + S-adenosyl-L-homocysteine + H(+). Methylates the ribose at the nucleotide 34 wobble position in the two leucyl isoacceptors tRNA(Leu)(CmAA) and tRNA(Leu)(cmnm5UmAA). Catalyzes the methyl transfer from S-adenosyl-L-methionine to the 2'-OH of the wobble nucleotide. This Burkholderia cenocepacia (strain HI2424) protein is tRNA (cytidine(34)-2'-O)-methyltransferase.